Reading from the N-terminus, the 839-residue chain is Glycerol-3-phosphate acyltransferase (839 aa).

The HXXXXD motif signature appears at 309 to 314; the sequence is CHRSHI.

The protein belongs to the GPAT/DAPAT family.

Its subcellular location is the cell inner membrane. It catalyses the reaction sn-glycerol 3-phosphate + an acyl-CoA = a 1-acyl-sn-glycero-3-phosphate + CoA. The protein operates within phospholipid metabolism; CDP-diacylglycerol biosynthesis; CDP-diacylglycerol from sn-glycerol 3-phosphate: step 1/3. The protein is Glycerol-3-phosphate acyltransferase of Pseudomonas fluorescens (strain SBW25).